We begin with the raw amino-acid sequence, 184 residues long: UPF0398 protein BC_1561 (184 aa).

It belongs to the UPF0398 family.

This Bacillus cereus (strain ATCC 14579 / DSM 31 / CCUG 7414 / JCM 2152 / NBRC 15305 / NCIMB 9373 / NCTC 2599 / NRRL B-3711) protein is UPF0398 protein BC_1561.